The chain runs to 78 residues: Protein Class8-like (78 aa).

The N-terminal stretch at 1-19 is a signal peptide; it reads MRTLVVLLIGAVLLCSANA. A propeptide spanning residues 20 to 36 is cleaved from the precursor; sequence FLDELLAESVNDMTDKR. A ShKT domain is found at 38–78; it reads CFDKYKSNICGGVISPAHCVRRSGRMAKFAKENCAHFCGFC. 3 cysteine pairs are disulfide-bonded: cysteine 38-cysteine 78, cysteine 47-cysteine 71, and cysteine 56-cysteine 75.

In terms of tissue distribution, expressed in ganglion neurons residing in the mesoglea (observed in both planulae and primary polyps). Not expressed in nematocytes.

Probable neuropeptide. The protein is Protein Class8-like of Nematostella vectensis (Starlet sea anemone).